A 139-amino-acid polypeptide reads, in one-letter code: ATP synthase epsilon chain (139 aa).

The protein belongs to the ATPase epsilon chain family. In terms of assembly, F-type ATPases have 2 components, CF(1) - the catalytic core - and CF(0) - the membrane proton channel. CF(1) has five subunits: alpha(3), beta(3), gamma(1), delta(1), epsilon(1). CF(0) has three main subunits: a, b and c.

It localises to the cell inner membrane. Its function is as follows. Produces ATP from ADP in the presence of a proton gradient across the membrane. The protein is ATP synthase epsilon chain of Actinobacillus pleuropneumoniae serotype 5b (strain L20).